A 501-amino-acid chain; its full sequence is Probable cytochrome P450 6a20 (501 aa).

Cys445 serves as a coordination point for heme.

It belongs to the cytochrome P450 family. The cofactor is heme.

The protein resides in the endoplasmic reticulum membrane. It localises to the microsome membrane. Functionally, may be involved in the metabolism of insect hormones and in the breakdown of synthetic insecticides. This Drosophila melanogaster (Fruit fly) protein is Probable cytochrome P450 6a20 (Cyp6a20).